Reading from the N-terminus, the 753-residue chain is MTIINHTLGFPRVGLRRELKKAQESYWAGNATREELLTVGRELRARHWEQQKQAGVDLLPVGDFAWYDHVLTTSLLLGNVPARHQNKDGSIDIDTLFRIGRGRAPTGEPAAAAEMTKWFNTNYHYMVPEFVKGQQFKLTWTQLLDEVDEALALGHKIKPVLLGPVTYLWLGKVKGEPFDRLSLLNDILPVYQQVLAELAKRGIEWVQIDEPALVLELPPAWLEAFKPAYDALQGQVKLLLTTYFEGISDNLATIAALPVQGLHVDLVHGKDDVAELHNRLPADWLLSAGLINGRNVWRADLTEKYAQIKDLVGKRDLWVASSCSLLHSPIDLSVETRLDAEVKSWFAFALQKCGELALLRDALNSGDTAAITEWSAPIQARRHSTRVHNAEVEKRLAAITAQDSQRASPYEVRAQAQRQRFNLPKWPTTTIGSFPQTTEIRGLRLDFKKGNLDASHYRTGIAEHIKQAIVEQERLGLDVLVHGEAERNDMVEYFGEHLDGFIFTQNGWVQSYGSRCVKPPVVIGDVSRPQAITVDWAKYAQSLTDKPVKGMLTGPVTILCWSFPREDVSRETIAKQIALALRDEVADLEAAGIGIIQIDEPALREGLPLKRSDWDAYLQWGVEAFRLNAAVAKDDTQIHTHMCYCEFNDIMDSIAALDADVITIETSRSDMELLESFEAFEYPNEIGPGVYDIHSPNVPSVEWIEALLAKAAQRIPAERLWVNPDCGLKTRGWPETRAALANMVQAAQNLRQA.

5-methyltetrahydropteroyltri-L-glutamate is bound by residues 17-20 (RELK) and Lys117. Residues 431–433 (IGS) and Glu484 each bind L-homocysteine. Residues 431-433 (IGS) and Glu484 each bind L-methionine. Residues 515-516 (RC) and Trp561 contribute to the 5-methyltetrahydropteroyltri-L-glutamate site. Residue Asp599 participates in L-homocysteine binding. Asp599 is a binding site for L-methionine. Glu605 is a 5-methyltetrahydropteroyltri-L-glutamate binding site. Positions 641, 643, and 665 each coordinate Zn(2+). The active-site Proton donor is His694. Cys726 serves as a coordination point for Zn(2+).

The protein belongs to the vitamin-B12 independent methionine synthase family. The cofactor is Zn(2+).

The enzyme catalyses 5-methyltetrahydropteroyltri-L-glutamate + L-homocysteine = tetrahydropteroyltri-L-glutamate + L-methionine. Its pathway is amino-acid biosynthesis; L-methionine biosynthesis via de novo pathway; L-methionine from L-homocysteine (MetE route): step 1/1. In terms of biological role, catalyzes the transfer of a methyl group from 5-methyltetrahydrofolate to homocysteine resulting in methionine formation. This is 5-methyltetrahydropteroyltriglutamate--homocysteine methyltransferase from Klebsiella pneumoniae (strain 342).